The sequence spans 645 residues: Translation factor GUF1, mitochondrial (645 aa).

Residues 44–228 enclose the tr-type G domain; it reads ENYRNFSIVA…AIIDRIPPPT (185 aa). GTP is bound by residues 53 to 60, 120 to 124, and 174 to 177; these read AHVDHGKS, DTPGH, and NKID.

The protein belongs to the TRAFAC class translation factor GTPase superfamily. Classic translation factor GTPase family. LepA subfamily.

The protein localises to the mitochondrion inner membrane. It carries out the reaction GTP + H2O = GDP + phosphate + H(+). Its function is as follows. Promotes mitochondrial protein synthesis. May act as a fidelity factor of the translation reaction, by catalyzing a one-codon backward translocation of tRNAs on improperly translocated ribosomes. Binds to mitochondrial ribosomes in a GTP-dependent manner. The polypeptide is Translation factor GUF1, mitochondrial (Saccharomyces cerevisiae (strain ATCC 204508 / S288c) (Baker's yeast)).